Reading from the N-terminus, the 136-residue chain is Sec-independent protein translocase protein TatB (136 aa).

Residues 2 to 22 (FGSVGWGELLVLLIVGLVVLG) traverse the membrane as a helical segment. The tract at residues 107–136 (VTEPAPTPIVNPELAKPAEPGPTRYDADAT) is disordered.

Belongs to the TatB family. In terms of assembly, the Tat system comprises two distinct complexes: a TatABC complex, containing multiple copies of TatA, TatB and TatC subunits, and a separate TatA complex, containing only TatA subunits. Substrates initially bind to the TatABC complex, which probably triggers association of the separate TatA complex to form the active translocon.

Its subcellular location is the cell membrane. In terms of biological role, part of the twin-arginine translocation (Tat) system that transports large folded proteins containing a characteristic twin-arginine motif in their signal peptide across membranes. Together with TatC, TatB is part of a receptor directly interacting with Tat signal peptides. TatB may form an oligomeric binding site that transiently accommodates folded Tat precursor proteins before their translocation. The protein is Sec-independent protein translocase protein TatB of Mycobacteroides abscessus (strain ATCC 19977 / DSM 44196 / CCUG 20993 / CIP 104536 / JCM 13569 / NCTC 13031 / TMC 1543 / L948) (Mycobacterium abscessus).